A 166-amino-acid polypeptide reads, in one-letter code: Protein-export protein SecB (166 aa).

The protein belongs to the SecB family. In terms of assembly, homotetramer, a dimer of dimers. One homotetramer interacts with 1 SecA dimer.

The protein localises to the cytoplasm. Its function is as follows. One of the proteins required for the normal export of preproteins out of the cell cytoplasm. It is a molecular chaperone that binds to a subset of precursor proteins, maintaining them in a translocation-competent state. It also specifically binds to its receptor SecA. In Rhizorhabdus wittichii (strain DSM 6014 / CCUG 31198 / JCM 15750 / NBRC 105917 / EY 4224 / RW1) (Sphingomonas wittichii), this protein is Protein-export protein SecB.